A 100-amino-acid chain; its full sequence is MKLTPREKDKLLIFTAALLAERRRARGLKLNYPEAIAFITAALMEAARDGKTVAEVMHYGTTLLTRDDVMEGVPEMIPDIQVEATFPDGTKLVTVHHPIP.

The protein belongs to the urease gamma subunit family. In terms of assembly, heterotrimer of UreA (gamma), UreB (beta) and UreC (alpha) subunits. Three heterotrimers associate to form the active enzyme.

It localises to the cytoplasm. The catalysed reaction is urea + 2 H2O + H(+) = hydrogencarbonate + 2 NH4(+). It participates in nitrogen metabolism; urea degradation; CO(2) and NH(3) from urea (urease route): step 1/1. In Paraburkholderia xenovorans (strain LB400), this protein is Urease subunit gamma.